Reading from the N-terminus, the 102-residue chain is Large ribosomal subunit protein bL21 (102 aa).

This sequence belongs to the bacterial ribosomal protein bL21 family. As to quaternary structure, part of the 50S ribosomal subunit. Contacts protein L20.

Functionally, this protein binds to 23S rRNA in the presence of protein L20. This is Large ribosomal subunit protein bL21 from Cytophaga hutchinsonii (strain ATCC 33406 / DSM 1761 / CIP 103989 / NBRC 15051 / NCIMB 9469 / D465).